Here is a 116-residue protein sequence, read N- to C-terminus: Protein alpha-2 (116 aa).

In Bos taurus (Bovine), this protein is Protein alpha-2 (alpha).